We begin with the raw amino-acid sequence, 401 residues long: Phosphoglycerate kinase (401 aa).

Substrate-binding positions include 29–31, arginine 45, 69–72, arginine 125, and arginine 158; these read DFN and HLGR. Residues lysine 209, glutamate 331, and 357-360 contribute to the ATP site; that span reads GGDT.

This sequence belongs to the phosphoglycerate kinase family. Monomer.

The protein resides in the cytoplasm. It carries out the reaction (2R)-3-phosphoglycerate + ATP = (2R)-3-phospho-glyceroyl phosphate + ADP. The protein operates within carbohydrate degradation; glycolysis; pyruvate from D-glyceraldehyde 3-phosphate: step 2/5. In Wolinella succinogenes (strain ATCC 29543 / DSM 1740 / CCUG 13145 / JCM 31913 / LMG 7466 / NCTC 11488 / FDC 602W) (Vibrio succinogenes), this protein is Phosphoglycerate kinase.